A 406-amino-acid polypeptide reads, in one-letter code: UPF0754 membrane protein SYNPCC7002_A1087 (406 aa).

A helical transmembrane segment spans residues 384-404; it reads IVNLGGVLGFLVGVAQSVILL.

It belongs to the UPF0754 family.

It is found in the cell inner membrane. The protein is UPF0754 membrane protein SYNPCC7002_A1087 of Picosynechococcus sp. (strain ATCC 27264 / PCC 7002 / PR-6) (Agmenellum quadruplicatum).